The primary structure comprises 232 residues: Phosphatidylserine decarboxylase proenzyme (232 aa).

The active-site Schiff-base intermediate with substrate; via pyruvic acid is the S190. A Pyruvic acid (Ser); by autocatalysis modification is found at S190.

The protein belongs to the phosphatidylserine decarboxylase family. PSD-A subfamily. Heterodimer of a large membrane-associated beta subunit and a small pyruvoyl-containing alpha subunit. The cofactor is pyruvate. In terms of processing, is synthesized initially as an inactive proenzyme. Formation of the active enzyme involves a self-maturation process in which the active site pyruvoyl group is generated from an internal serine residue via an autocatalytic post-translational modification. Two non-identical subunits are generated from the proenzyme in this reaction, and the pyruvate is formed at the N-terminus of the alpha chain, which is derived from the carboxyl end of the proenzyme. The post-translation cleavage follows an unusual pathway, termed non-hydrolytic serinolysis, in which the side chain hydroxyl group of the serine supplies its oxygen atom to form the C-terminus of the beta chain, while the remainder of the serine residue undergoes an oxidative deamination to produce ammonia and the pyruvoyl prosthetic group on the alpha chain.

The protein localises to the cell membrane. The catalysed reaction is a 1,2-diacyl-sn-glycero-3-phospho-L-serine + H(+) = a 1,2-diacyl-sn-glycero-3-phosphoethanolamine + CO2. It participates in phospholipid metabolism; phosphatidylethanolamine biosynthesis; phosphatidylethanolamine from CDP-diacylglycerol: step 2/2. Functionally, catalyzes the formation of phosphatidylethanolamine (PtdEtn) from phosphatidylserine (PtdSer). This is Phosphatidylserine decarboxylase proenzyme from Rhodopseudomonas palustris (strain TIE-1).